The following is a 302-amino-acid chain: Sulfate adenylyltransferase subunit 2 (302 aa).

It belongs to the PAPS reductase family. CysD subfamily. In terms of assembly, heterodimer composed of CysD, the smaller subunit, and CysN.

It catalyses the reaction sulfate + ATP + H(+) = adenosine 5'-phosphosulfate + diphosphate. It participates in sulfur metabolism; hydrogen sulfide biosynthesis; sulfite from sulfate: step 1/3. Functionally, with CysN forms the ATP sulfurylase (ATPS) that catalyzes the adenylation of sulfate producing adenosine 5'-phosphosulfate (APS) and diphosphate, the first enzymatic step in sulfur assimilation pathway. APS synthesis involves the formation of a high-energy phosphoric-sulfuric acid anhydride bond driven by GTP hydrolysis by CysN coupled to ATP hydrolysis by CysD. This Psychromonas ingrahamii (strain DSM 17664 / CCUG 51855 / 37) protein is Sulfate adenylyltransferase subunit 2.